Consider the following 337-residue polypeptide: Glutathione transferase 3 (337 aa).

Over 1-239 the chain is Cytoplasmic; it reads MPTKSTFSRW…NKYQYTLDFC (239 aa). 4 positions are modified to phosphoserine: Ser-66, Ser-72, Ser-99, and Ser-116. The interval 66–95 is disordered; that stretch reads SMTVDQSKDERNEYGSGSGNGSGSGSCDTA. A disordered region spans residues 107–132; sequence KEDDDEKPQSGDETSATKPLSSRNAN. Over residues 117–132 the composition is skewed to polar residues; the sequence is GDETSATKPLSSRNAN. The helical transmembrane segment at 240-260 threads the bilayer; that stretch reads LPILTWLLFFRGIPTLVSYYI. Topologically, residues 261–313 are perinuclear space; that stretch reads NFIRYDLNIELDPMTFNLTKFLISLAIFKTCNNKNIDFHSFRCVNQLWTQLCT. The chain crosses the membrane as a helical span at residues 314-336; it reads VNRSLGMVPLVFSMVSCLLTLYV. Leu-337 is a topological domain (cytoplasmic).

The protein localises to the nucleus membrane. This chain is Glutathione transferase 3 (GTT3), found in Saccharomyces cerevisiae (strain ATCC 204508 / S288c) (Baker's yeast).